The primary structure comprises 279 residues: Putative short-chain type dehydrogenase/reductase MSMEG_6031/MSMEI_5872 (279 aa).

11 to 33 (FITGAARGQGRSHAVRLAEEGAD) provides a ligand contact to NAD(+). Residue Lys-65 forms an Isoglutamyl lysine isopeptide (Lys-Gln) (interchain with Q-Cter in protein Pup) linkage. Ser-158 contacts substrate. Tyr-171 serves as the catalytic Proton acceptor.

The protein belongs to the short-chain dehydrogenases/reductases (SDR) family.

This Mycolicibacterium smegmatis (strain ATCC 700084 / mc(2)155) (Mycobacterium smegmatis) protein is Putative short-chain type dehydrogenase/reductase MSMEG_6031/MSMEI_5872.